A 91-amino-acid chain; its full sequence is Small ribosomal subunit protein uS19 (91 aa).

Belongs to the universal ribosomal protein uS19 family.

In terms of biological role, protein S19 forms a complex with S13 that binds strongly to the 16S ribosomal RNA. This is Small ribosomal subunit protein uS19 from Pseudomonas fluorescens (strain Pf0-1).